The chain runs to 995 residues: DExH-box ATP-dependent RNA helicase DExH1 (995 aa).

Disordered regions lie at residues 1 to 42 and 156 to 192; these read MPPH…EQRW and KTTQ…ASKL. The segment covering 25-37 has biased composition (gly residues); sequence RGGGGRGGGGGGR. Residues 161–170 are compositionally biased toward low complexity; it reads SGSSGASASA. Positions 171–181 are enriched in polar residues; it reads FNDQQDRTSTL. The Helicase ATP-binding domain maps to 238–405; that stretch reads LNSVSQNQVL…FGNSPTMHIP (168 aa). Residue 251-258 coordinates ATP; sequence GETGCGKT. Residues 352-355 carry the DEIH box motif; that stretch reads DEIH. The tract at residues 429-450 is disordered; the sequence is SSDSGNYQGSSRGRRRESESKK. The Helicase C-terminal domain maps to 484 to 663; sequence QIDVDLVEAT…ELCLHIKSLQ (180 aa).

This sequence belongs to the DExH box helicase family.

It carries out the reaction ATP + H2O = ADP + phosphate + H(+). The protein is DExH-box ATP-dependent RNA helicase DExH1 of Arabidopsis thaliana (Mouse-ear cress).